Consider the following 224-residue polypeptide: Zinc finger C4H2 domain-containing protein (224 aa).

The stretch at 11 to 104 (LESIKEIRNK…RRLHDEYKPL (94 aa)) forms a coiled coil. The C4H2-type zinc-finger motif lies at 189–206 (CLSCHQQIHRNAPICPLC).

Expressed in fetal tissues, including in brain, intestine, lung, kidney and muscle. Isoform 1 is expressed in numerous fetal brain regions. Isoform 3 is highly expressed in numerous fetal brain regions and spinal cord.

The protein resides in the cytoplasm. The protein localises to the nucleus. Its subcellular location is the postsynaptic cell membrane. Plays a role in interneurons differentiation. Involved in neuronal development and in neuromuscular junction formation. In Homo sapiens (Human), this protein is Zinc finger C4H2 domain-containing protein (ZC4H2).